We begin with the raw amino-acid sequence, 356 residues long: 3-isopropylmalate dehydrogenase (356 aa).

The substrate site is built by Arg-95, Arg-105, Arg-133, and Asp-223. 3 residues coordinate Mg(2+): Asp-223, Asp-247, and Asp-251. 281–293 contributes to the NAD(+) binding site; it reads GSAPDIAGQNKAN.

It belongs to the isocitrate and isopropylmalate dehydrogenases family. LeuB type 1 subfamily. Homodimer. The cofactor is Mg(2+). Mn(2+) serves as cofactor.

It localises to the cytoplasm. It catalyses the reaction (2R,3S)-3-isopropylmalate + NAD(+) = 4-methyl-2-oxopentanoate + CO2 + NADH. The protein operates within amino-acid biosynthesis; L-leucine biosynthesis; L-leucine from 3-methyl-2-oxobutanoate: step 3/4. Functionally, catalyzes the oxidation of 3-carboxy-2-hydroxy-4-methylpentanoate (3-isopropylmalate) to 3-carboxy-4-methyl-2-oxopentanoate. The product decarboxylates to 4-methyl-2 oxopentanoate. The protein is 3-isopropylmalate dehydrogenase of Neisseria gonorrhoeae (strain ATCC 700825 / FA 1090).